We begin with the raw amino-acid sequence, 98 residues long: Integration host factor subunit beta (98 aa).

It belongs to the bacterial histone-like protein family. Heterodimer of an alpha and a beta chain.

This protein is one of the two subunits of integration host factor, a specific DNA-binding protein that functions in genetic recombination as well as in transcriptional and translational control. This is Integration host factor subunit beta from Hahella chejuensis (strain KCTC 2396).